A 119-amino-acid polypeptide reads, in one-letter code: Aspartate 1-decarboxylase (119 aa).

S25 serves as the catalytic Schiff-base intermediate with substrate; via pyruvic acid. S25 bears the Pyruvic acid (Ser) mark. A substrate-binding site is contributed by T57. The Proton donor role is filled by Y58. 73-75 (GAA) serves as a coordination point for substrate.

This sequence belongs to the PanD family. Heterooctamer of four alpha and four beta subunits. The cofactor is pyruvate. In terms of processing, is synthesized initially as an inactive proenzyme, which is activated by self-cleavage at a specific serine bond to produce a beta-subunit with a hydroxyl group at its C-terminus and an alpha-subunit with a pyruvoyl group at its N-terminus.

The protein resides in the cytoplasm. The enzyme catalyses L-aspartate + H(+) = beta-alanine + CO2. It participates in cofactor biosynthesis; (R)-pantothenate biosynthesis; beta-alanine from L-aspartate: step 1/1. In terms of biological role, catalyzes the pyruvoyl-dependent decarboxylation of aspartate to produce beta-alanine. This chain is Aspartate 1-decarboxylase, found in Desulfotalea psychrophila (strain LSv54 / DSM 12343).